We begin with the raw amino-acid sequence, 534 residues long: Coiled-coil domain-containing protein 183 (534 aa).

Coiled-coil stretches lie at residues 10 to 54, 136 to 209, and 323 to 396; these read EEQT…NIRR, DASK…DMKI, and LAQR…HSNM.

The polypeptide is Coiled-coil domain-containing protein 183 (CCDC183) (Homo sapiens (Human)).